The primary structure comprises 316 residues: N-acetylmuramic acid 6-phosphate etherase (316 aa).

A disordered region spans residues 1-23 (MAGFDPTLQPSDDRGHLLTEQSN). In terms of domain architecture, SIS spans 66-229 (ISKRLSSGGR…STTVMVRLGK (164 aa)). The active-site Proton donor is Glu94. Residue Glu125 is part of the active site.

This sequence belongs to the GCKR-like family. MurNAc-6-P etherase subfamily. In terms of assembly, homodimer.

The enzyme catalyses N-acetyl-D-muramate 6-phosphate + H2O = N-acetyl-D-glucosamine 6-phosphate + (R)-lactate. It participates in amino-sugar metabolism; N-acetylmuramate degradation. Functionally, specifically catalyzes the cleavage of the D-lactyl ether substituent of MurNAc 6-phosphate, producing GlcNAc 6-phosphate and D-lactate. The polypeptide is N-acetylmuramic acid 6-phosphate etherase (Synechococcus sp. (strain CC9902)).